The chain runs to 635 residues: Very-long-chain aldehyde decarbonylase GL1-6 (635 aa).

4 helical membrane-spanning segments follow: residues 46 to 66, 100 to 120, 127 to 147, and 183 to 203; these read LLNFMVFPMLLLRLLYGQLWI, IILTALVFYLVSATMPQAQVA, GMVVTAVLHAGPVEFLYYWLH, and VVYFVLLAIPILSTVATGTVS. The Fatty acid hydroxylase domain maps to 139–273; sequence VEFLYYWLHR…MPVYDYIYGT (135 aa).

Belongs to the sterol desaturase family. Homodimer. In terms of tissue distribution, expressed in germinating seeds and shoots.

It localises to the endoplasmic reticulum membrane. The enzyme catalyses a long-chain fatty aldehyde + 2 NADPH + O2 + H(+) = a long-chain alkane + formate + 2 NADP(+) + H2O. In terms of biological role, aldehyde decarbonylase involved in the conversion of aldehydes to alkanes. Core component of a very-long-chain alkane synthesis complex. The chain is Very-long-chain aldehyde decarbonylase GL1-6 from Oryza sativa subsp. japonica (Rice).